The sequence spans 132 residues: L-ectoine synthase (132 aa).

It belongs to the ectoine synthase family.

The enzyme catalyses (2S)-4-acetamido-2-aminobutanoate = L-ectoine + H2O. It functions in the pathway amine and polyamine biosynthesis; ectoine biosynthesis; L-ectoine from L-aspartate 4-semialdehyde: step 3/3. Functionally, catalyzes the circularization of gamma-N-acetyl-alpha,gamma-diaminobutyric acid (ADABA) to ectoine (1,4,5,6-tetrahydro-2-methyl-4-pyrimidine carboxylic acid), which is an excellent osmoprotectant. In Alkalilimnicola ehrlichii (strain ATCC BAA-1101 / DSM 17681 / MLHE-1), this protein is L-ectoine synthase.